The primary structure comprises 244 residues: tRNA pseudouridine synthase A (244 aa).

Aspartate 52 acts as the Nucleophile in catalysis. Residue tyrosine 110 coordinates substrate.

Belongs to the tRNA pseudouridine synthase TruA family. In terms of assembly, homodimer.

It catalyses the reaction uridine(38/39/40) in tRNA = pseudouridine(38/39/40) in tRNA. Its function is as follows. Formation of pseudouridine at positions 38, 39 and 40 in the anticodon stem and loop of transfer RNAs. The protein is tRNA pseudouridine synthase A of Clostridium acetobutylicum (strain ATCC 824 / DSM 792 / JCM 1419 / IAM 19013 / LMG 5710 / NBRC 13948 / NRRL B-527 / VKM B-1787 / 2291 / W).